Reading from the N-terminus, the 464-residue chain is Centrosomal protein of 55 kDa (464 aa).

Over residues 1–11 (MSSRSTKDLIK) the composition is skewed to basic and acidic residues. Residues 1–26 (MSSRSTKDLIKSKWGSKPSNSKSETT) form a disordered region. Coiled-coil stretches lie at residues 22–186 (KSET…QWLV), 238–337 (NDLL…FLYT), and 374–403 (QHQL…LHEF). At Ser-96 the chain carries Phosphoserine. The interval 157 to 236 (PNCFNSSINN…GYLQEEKQKC (80 aa)) is interaction with TSG101. Residues 160–214 (FNSSINNIHEMEIQLKDALEKNQQWLVYDQQREVYVKGLLAKIFELEKKTETAAH) are interaction with PDCD6IP. A required for localization to the interphase centrosome and to the midbody during cytokinesis region spans residues 355-464 (QMQACTLDFE…LLVHVEYCSK (110 aa)). 2 positions are modified to phosphoserine; by CDK1 and MAPK1: Ser-425 and Ser-428. At Thr-430 the chain carries Phosphothreonine. Position 436 is a phosphoserine; by PLK1 (Ser-436).

In terms of assembly, homodimer. Interacts (phosphorylated on Ser-425 and Ser-428) with PLK1; the interaction is indirect via the MTMR3:MTMR4 heterooligomer, occurs during early mitosis, regulates the phosphorylation of CEP55 by PLK1 and its recruitment to the midbody where it can mediate cell abscission. Interacts with AKAP9/CG-NAP; the interaction occurs in interphase and is lost upon mitotic entry. Interacts with PCNT/Kendrin; the interaction occurs in interphase and is lost upon mitotic entry. Directly interacts with PDCD6IP; this interaction is required for PDCD6IP targeting to the midbody; CEP55 binds PDCD6IP in a 2:1 stoichiometry; PDCD6IP competes with TSG101 for the same binding site. Interacts with TSG101; TSG101 competes with PDCD6IP for the same binding site; interaction is required for cytokinesis but not for viral budding. Interacts with MVB12A, VPS37B, VPS37C and VPS28. In terms of processing, there is a hierachy of phosphorylation, where both Ser-425 and Ser-428 are phosphorylated at the onset of mitosis, prior to Ser-436. Phosphorylation at Ser-425 and Ser-428 is required for dissociation from the centrosome at the G2/M boundary. Phosphorylation at the 3 sites, Ser-425, Ser-428 and Ser-436, is required for protein function at the final stages of cell division to complete cytokinesis successfully. Expressed in embryonic brain. Expressed in fetal brain ganglionic eminence, kidney tubules and multinucleate neurons in the temporal cortex. Expressed in adult brain, cerebellum, kidney tubules, intestine and muscles (at protein level). Widely expressed, mostly in proliferative tissues. Highly expressed in testis. Intermediate levels in adult and fetal thymus, as well as in various cancer cell lines. Low levels in different parts of the digestive tract, bone marrow, lymph nodes, placenta, fetal heart and fetal spleen. Hardly detected in brain.

It is found in the cytoplasm. The protein resides in the cytoskeleton. Its subcellular location is the microtubule organizing center. The protein localises to the centrosome. It localises to the centriole. It is found in the cleavage furrow. The protein resides in the midbody. Its subcellular location is the midbody ring. Its function is as follows. Plays a role in mitotic exit and cytokinesis. Recruits PDCD6IP and TSG101 to midbody during cytokinesis. Required for successful completion of cytokinesis. Not required for microtubule nucleation. Plays a role in the development of the brain and kidney. The sequence is that of Centrosomal protein of 55 kDa from Homo sapiens (Human).